We begin with the raw amino-acid sequence, 371 residues long: Mitogen-activated protein kinase homolog NTF6 (371 aa).

In terms of domain architecture, Protein kinase spans 38-324; the sequence is IPPIQPVGRG…VEDALNHPFL (287 aa). ATP is bound by residues 44–52 and K67; that span reads VGRGAYGMV. D164 acts as the Proton acceptor in catalysis. Phosphothreonine is present on T196. The TXY motif lies at 196 to 198; that stretch reads TEY. Position 198 is a phosphotyrosine (Y198).

This sequence belongs to the protein kinase superfamily. CMGC Ser/Thr protein kinase family. MAP kinase subfamily. The cofactor is Mg(2+). Post-translationally, dually phosphorylated on Thr-196 and Tyr-198, which activates the enzyme. Very low autophosphorylation, although dramatically increased when Mn(2+) is added to the reaction instead of Mg(2+).

The enzyme catalyses L-seryl-[protein] + ATP = O-phospho-L-seryl-[protein] + ADP + H(+). It catalyses the reaction L-threonyl-[protein] + ATP = O-phospho-L-threonyl-[protein] + ADP + H(+). Activated by tyrosine and threonine phosphorylation. The polypeptide is Mitogen-activated protein kinase homolog NTF6 (NTF6) (Nicotiana tabacum (Common tobacco)).